Reading from the N-terminus, the 430-residue chain is Tol-Pal system protein TolB (430 aa).

The first 21 residues, 1 to 21 (MKQALRVAFGFLILWASVLHA), serve as a signal peptide directing secretion.

It belongs to the TolB family. As to quaternary structure, the Tol-Pal system is composed of five core proteins: the inner membrane proteins TolA, TolQ and TolR, the periplasmic protein TolB and the outer membrane protein Pal. They form a network linking the inner and outer membranes and the peptidoglycan layer.

The protein resides in the periplasm. In terms of biological role, part of the Tol-Pal system, which plays a role in outer membrane invagination during cell division and is important for maintaining outer membrane integrity. TolB occupies a key intermediary position in the Tol-Pal system because it communicates directly with both membrane-embedded components, Pal in the outer membrane and TolA in the inner membrane. This is Tol-Pal system protein TolB from Escherichia coli O139:H28 (strain E24377A / ETEC).